Reading from the N-terminus, the 249-residue chain is GTP cyclohydrolase 1 type 2 homolog (249 aa).

A divalent metal cation contacts are provided by histidine 64, histidine 65, aspartate 102, histidine 217, and glutamate 221.

The protein belongs to the GTP cyclohydrolase I type 2/NIF3 family. As to quaternary structure, homohexamer.

This is GTP cyclohydrolase 1 type 2 homolog from Neisseria meningitidis serogroup B (strain ATCC BAA-335 / MC58).